The primary structure comprises 449 residues: Pectate lyase L (449 aa).

Residues 1–26 (MFKRNDRSKNGFNALRLGVSFVLASS) form the signal peptide. A lipid anchor (N-palmitoyl cysteine) is attached at Cys27. Residue Cys27 is the site of S-diacylglycerol cysteine attachment. PbH1 repeat units follow at residues 158–179 (GDFW…IYIG), 180–202 (GSNN…QLGR), 213–242 (PANN…AAKL), 245–267 (GSGN…DLYS), 274–308 (IGAV…KLGG), 336–358 (PGTI…AFDK), and 359–391 (GEHV…WWKN). Ca(2+) is bound by residues Asp236, Asp260, Asp261, and Asp264. Lys305 acts as the Proton acceptor in catalysis.

The protein belongs to the polysaccharide lyase 9 family. Ca(2+) is required as a cofactor.

It is found in the secreted. The catalysed reaction is Eliminative cleavage of (1-&gt;4)-alpha-D-galacturonan to give oligosaccharides with 4-deoxy-alpha-D-galact-4-enuronosyl groups at their non-reducing ends.. Its activity is regulated as follows. Activated in presence of the surfactant polysorbate 20, while inhibited in the presence of polysorbate 40, polysorbate 60, polysorbate 80, Triton X-100 and sodium dodecyl sulfate. Inhibited by the metal chelator ethylenediaminetetraacetic acid (EDTA). Inhibited by iron and cobalt ions. In terms of biological role, presents an endo-cleaving activity on the homogalacturonan (HG) region in pectin with a preference for low- or unmethylated pectin. The sequence is that of Pectate lyase L from Paenibacillus polymyxa (strain SC2) (Bacillus polymyxa).